The primary structure comprises 186 residues: MDATVTVVGNLTADPELRYTATGAAVVNMTIASTPRMYDRQSGEWKDGEPLFLRGILWREYAINAAASLAKGMRVVAVGKLKQRNYETREGDRRTSVELEIDEIGPTLRYATAKCSRATQAGHGVSPDPWADSQGSQGIDSHTTRSEEITENAKNGEGAGKNELNKKVLVGDNVSYEDFDSDEVPF.

Residues 1 to 108 (MDATVTVVGN…LEIDEIGPTL (108 aa)) enclose the SSB domain. The interval 119 to 186 (TQAGHGVSPD…EDFDSDEVPF (68 aa)) is disordered. A compositionally biased stretch (acidic residues) spans 175 to 186 (SYEDFDSDEVPF).

In terms of assembly, homotetramer.

This Tropheryma whipplei (strain Twist) (Whipple's bacillus) protein is Single-stranded DNA-binding protein 1 (ssb1).